The sequence spans 126 residues: Large ribosomal subunit protein bL19 (126 aa).

The protein belongs to the bacterial ribosomal protein bL19 family.

Functionally, this protein is located at the 30S-50S ribosomal subunit interface and may play a role in the structure and function of the aminoacyl-tRNA binding site. The polypeptide is Large ribosomal subunit protein bL19 (Bordetella bronchiseptica (strain ATCC BAA-588 / NCTC 13252 / RB50) (Alcaligenes bronchisepticus)).